The sequence spans 463 residues: L-cystine uptake protein TcyP (463 aa).

10 helical membrane passes run 3–23 (TLLV…LFVM), 34–54 (VFTA…IYGP), 73–93 (YVKL…LGAF), 105–125 (ISGL…AVGI), 184–204 (PTST…FLGV), 225–245 (IVMR…LAIM), 262–282 (MFVI…LLLL), 338–358 (LSIG…MMIA), 369–389 (VFII…AGVG), and 394–414 (FAAL…GLLI).

The protein belongs to the dicarboxylate/amino acid:cation symporter (DAACS) (TC 2.A.23) family.

The protein localises to the cell membrane. Mediates uptake of L-cystine, the oxidized form of L-cysteine. Although it is more specific for L-cystine, it could also transport a much broader range of amino acids and sulfur compounds including S-methylcysteine. The polypeptide is L-cystine uptake protein TcyP (tcyP) (Bacillus subtilis (strain 168)).